A 754-amino-acid chain; its full sequence is 5-methyltetrahydropteroyltriglutamate--homocysteine methyltransferase (754 aa).

5-methyltetrahydropteroyltri-L-glutamate-binding positions include 17–20 and Lys-117; that span reads RELK. L-homocysteine contacts are provided by residues 431–433 and Glu-484; that span reads IGS. L-methionine is bound by residues 431 to 433 and Glu-484; that span reads IGS. Residues 515–516 and Trp-561 contribute to the 5-methyltetrahydropteroyltri-L-glutamate site; that span reads RC. Asp-599 is an L-homocysteine binding site. Asp-599 contributes to the L-methionine binding site. Glu-605 serves as a coordination point for 5-methyltetrahydropteroyltri-L-glutamate. Zn(2+) is bound by residues His-641, Cys-643, and Glu-665. Catalysis depends on His-694, which acts as the Proton donor. Cys-726 is a Zn(2+) binding site.

It belongs to the vitamin-B12 independent methionine synthase family. It depends on Zn(2+) as a cofactor.

It catalyses the reaction 5-methyltetrahydropteroyltri-L-glutamate + L-homocysteine = tetrahydropteroyltri-L-glutamate + L-methionine. Its pathway is amino-acid biosynthesis; L-methionine biosynthesis via de novo pathway; L-methionine from L-homocysteine (MetE route): step 1/1. Functionally, catalyzes the transfer of a methyl group from 5-methyltetrahydrofolate to homocysteine resulting in methionine formation. In Salmonella choleraesuis (strain SC-B67), this protein is 5-methyltetrahydropteroyltriglutamate--homocysteine methyltransferase.